Consider the following 413-residue polypeptide: Putative F-box/kelch-repeat protein At3g22870 (413 aa).

The F-box domain maps to 2–53; sequence TLTISDLPRDLKKKIFSRIPLRYVRALRLTCKEWETLIKSRSLKIDEEESQM. 2 Kelch repeats span residues 156-202 and 331-379; these read LLRF…IGVS and KVFI…RRRQ.

This Arabidopsis thaliana (Mouse-ear cress) protein is Putative F-box/kelch-repeat protein At3g22870.